A 132-amino-acid polypeptide reads, in one-letter code: Large ribosomal subunit protein bL12 (132 aa).

The protein belongs to the bacterial ribosomal protein bL12 family. Homodimer. Part of the ribosomal stalk of the 50S ribosomal subunit. Forms a multimeric L10(L12)X complex, where L10 forms an elongated spine to which 2 to 4 L12 dimers bind in a sequential fashion. Binds GTP-bound translation factors.

Its function is as follows. Forms part of the ribosomal stalk which helps the ribosome interact with GTP-bound translation factors. Is thus essential for accurate translation. The sequence is that of Large ribosomal subunit protein bL12 from Prochlorococcus marinus (strain MIT 9211).